We begin with the raw amino-acid sequence, 128 residues long: Phosphoribosyl-AMP cyclohydrolase (128 aa).

Asp77 contributes to the Mg(2+) binding site. Cys78 is a binding site for Zn(2+). The Mg(2+) site is built by Asp79 and Asp81. The Zn(2+) site is built by Cys94 and Cys101.

Belongs to the PRA-CH family. Homodimer. Mg(2+) serves as cofactor. Requires Zn(2+) as cofactor.

It is found in the cytoplasm. It carries out the reaction 1-(5-phospho-beta-D-ribosyl)-5'-AMP + H2O = 1-(5-phospho-beta-D-ribosyl)-5-[(5-phospho-beta-D-ribosylamino)methylideneamino]imidazole-4-carboxamide. The protein operates within amino-acid biosynthesis; L-histidine biosynthesis; L-histidine from 5-phospho-alpha-D-ribose 1-diphosphate: step 3/9. Its function is as follows. Catalyzes the hydrolysis of the adenine ring of phosphoribosyl-AMP. In Granulibacter bethesdensis (strain ATCC BAA-1260 / CGDNIH1), this protein is Phosphoribosyl-AMP cyclohydrolase.